The chain runs to 1128 residues: GTPase-activating protein BEM3 (1128 aa).

A disordered region spans residues 194-241 (SSPTKIHSEQLASPAASVTYTTSRITIKSPNKGSKSPLQERLRSPQNP). Over residues 209-230 (ASVTYTTSRITIKSPNKGSKSP) the composition is skewed to polar residues. S254 carries the post-translational modification Phosphoserine. Disordered stretches follow at residues 345–391 (EDLV…TPLS) and 418–486 (PVLT…RPHA). Residues 366–375 (LPPPPAPPTF) show a composition bias toward pro residues. Composition is skewed to polar residues over residues 382–391 (GNIKNSTPLS) and 420–478 (LTSS…QGSL). In terms of domain architecture, PH spans 634–741 (DNVKDGSLLL…WLSAFSDYID (108 aa)). Disordered regions lie at residues 746–777 (LSLS…NATI) and 796–838 (NNNI…DSRR). Positions 752–764 (RNANDTDSASHLS) are enriched in polar residues. Positions 796-815 (NNNISNSSNNIANSDGIDSN) are enriched in low complexity. Over residues 816–829 (PSSHSNFLASSSGN) the composition is skewed to polar residues. The region spanning 913-1128 (LRLSSHKYQN…EKVDIHIPQV (216 aa)) is the Rho-GAP domain.

The protein resides in the cytoplasm. Its function is as follows. GTPase-activating protein (GAP) for CDC42 and less efficiently for RHO1. Negative regulator of the pheromone-response pathway through the STE20 protein kinase. The protein is GTPase-activating protein BEM3 (BEM3) of Saccharomyces cerevisiae (strain ATCC 204508 / S288c) (Baker's yeast).